We begin with the raw amino-acid sequence, 72 residues long: Translation initiation factor IF-1 (72 aa).

Residues 1-72 (MPKDDSIEVE…TRGRITYRAK (72 aa)) enclose the S1-like domain.

It belongs to the IF-1 family. Component of the 30S ribosomal translation pre-initiation complex which assembles on the 30S ribosome in the order IF-2 and IF-3, IF-1 and N-formylmethionyl-tRNA(fMet); mRNA recruitment can occur at any time during PIC assembly.

It localises to the cytoplasm. In terms of biological role, one of the essential components for the initiation of protein synthesis. Stabilizes the binding of IF-2 and IF-3 on the 30S subunit to which N-formylmethionyl-tRNA(fMet) subsequently binds. Helps modulate mRNA selection, yielding the 30S pre-initiation complex (PIC). Upon addition of the 50S ribosomal subunit IF-1, IF-2 and IF-3 are released leaving the mature 70S translation initiation complex. This is Translation initiation factor IF-1 from Myxococcus xanthus (strain DK1622).